A 224-amino-acid polypeptide reads, in one-letter code: 7-cyano-7-deazaguanine synthase (224 aa).

Residue 12–22 participates in ATP binding; sequence LSGGLDSSTVT. Zn(2+) contacts are provided by Cys-193, Cys-201, Cys-204, and Cys-207.

It belongs to the QueC family. Zn(2+) serves as cofactor.

It carries out the reaction 7-carboxy-7-deazaguanine + NH4(+) + ATP = 7-cyano-7-deazaguanine + ADP + phosphate + H2O + H(+). It participates in purine metabolism; 7-cyano-7-deazaguanine biosynthesis. In terms of biological role, catalyzes the ATP-dependent conversion of 7-carboxy-7-deazaguanine (CDG) to 7-cyano-7-deazaguanine (preQ(0)). This is 7-cyano-7-deazaguanine synthase from Prochlorococcus marinus (strain MIT 9215).